We begin with the raw amino-acid sequence, 63 residues long: uncharacterized protein (63 aa).

The signal sequence occupies residues 1–21 (MNRALILTFVLFFALFAISSA).

This is an uncharacterized protein from Dictyostelium discoideum (Social amoeba).